Reading from the N-terminus, the 1217-residue chain is Myosin-5 (1217 aa).

Over residues 1–11 (MAILKRGARNK) the composition is skewed to basic residues. A disordered region spans residues 1 to 24 (MAILKRGARNKTHQEPAKRGGNNI). Residues 37–716 (VGVSDLTLLT…TLFALENMRD (680 aa)) enclose the Myosin motor domain. 130–137 (GESGAGKT) contacts ATP. S358 is modified (phosphoserine). Residues 405–487 (SIGILDIYGF…PGIFAAMNDS (83 aa)) form an actin-binding region. IQ domains follow at residues 720–740 (HNMA…RIDA) and 741–766 (AVKI…YGTS). The 191-residue stretch at 772–962 (KERRSMSLLG…TIFVRRGNPA (191 aa)) folds into the TH1 domain. Disordered stretches follow at residues 956-1102 (VRRG…NPSE), 1145-1174 (GAKA…AQTV), and 1197-1217 (NKMR…DDDW). Residues 965-974 (KSKKKPRKKS) are compositionally biased toward basic residues. The span at 976–987 (GMSAPTTQSSKT) shows a compositional bias: polar residues. Residues 994–1007 (SSNNQNTTVSQSLN) show a composition bias toward low complexity. Pro residues predominate over residues 1025–1038 (PAPPPPGSKKPAPQ). Low complexity predominate over residues 1050–1071 (PQAQMQTQTQIPASQSSATQSS). A compositionally biased stretch (pro residues) spans 1072–1081 (IPPPPPPPPS). Residues 1083-1145 (TSEPQFEAAY…PTAYMVKHEG (63 aa)) form the SH3 domain. Over residues 1162-1174 (IQNQSQPASAQTV) the composition is skewed to polar residues. Over residues 1203-1217 (SDEEAAASSDNDDDW) the composition is skewed to acidic residues.

This sequence belongs to the TRAFAC class myosin-kinesin ATPase superfamily. Myosin family. Post-translationally, phosphorylation of the TEDS site (Ser-358) is required for the polarization of the actin cytoskeleton. Phosphorylation probably activates the myosin-I ATPase activity.

The protein resides in the cytoplasm. It is found in the cytoskeleton. The protein localises to the actin patch. Functionally, type-I myosin implicated in the organization of the actin cytoskeleton. Required for proper actin cytoskeleton polarization. At the cell cortex, assembles in patch-like structures together with proteins from the actin-polymerizing machinery and promotes actin assembly. Functions as actin nucleation-promoting factor (NPF) for the Arp2/3 complex. This is Myosin-5 (MYO5) from Candida glabrata (strain ATCC 2001 / BCRC 20586 / JCM 3761 / NBRC 0622 / NRRL Y-65 / CBS 138) (Yeast).